Consider the following 220-residue polypeptide: N-(5'-phosphoribosyl)anthranilate isomerase (220 aa).

This sequence belongs to the TrpF family.

The enzyme catalyses N-(5-phospho-beta-D-ribosyl)anthranilate = 1-(2-carboxyphenylamino)-1-deoxy-D-ribulose 5-phosphate. Its pathway is amino-acid biosynthesis; L-tryptophan biosynthesis; L-tryptophan from chorismate: step 3/5. This Xylella fastidiosa (strain M23) protein is N-(5'-phosphoribosyl)anthranilate isomerase.